The sequence spans 119 residues: Small ribosomal subunit protein uS10 (119 aa).

The protein belongs to the universal ribosomal protein uS10 family. In terms of assembly, component of the small ribosomal subunit. Mature ribosomes consist of a small (40S) and a large (60S) subunit. The 40S subunit contains about 32 different proteins and 1 molecule of RNA (18S). The 60S subunit contains 45 different proteins and 3 molecules of RNA (25S, 5.8S and 5S).

It is found in the cytoplasm. Its function is as follows. Component of the ribosome, a large ribonucleoprotein complex responsible for the synthesis of proteins in the cell. The small ribosomal subunit (SSU) binds messenger RNAs (mRNAs) and translates the encoded message by selecting cognate aminoacyl-transfer RNA (tRNA) molecules. The large subunit (LSU) contains the ribosomal catalytic site termed the peptidyl transferase center (PTC), which catalyzes the formation of peptide bonds, thereby polymerizing the amino acids delivered by tRNAs into a polypeptide chain. The nascent polypeptides leave the ribosome through a tunnel in the LSU and interact with protein factors that function in enzymatic processing, targeting, and the membrane insertion of nascent chains at the exit of the ribosomal tunnel. The polypeptide is Small ribosomal subunit protein uS10 (RPS20) (Candida albicans (strain SC5314 / ATCC MYA-2876) (Yeast)).